The following is a 190-amino-acid chain: Potassium-transporting ATPase KdpC subunit (190 aa).

The helical transmembrane segment at 10 to 30 (TFLFLLLITGGVYPLLTTALG) threads the bilayer.

It belongs to the KdpC family. The system is composed of three essential subunits: KdpA, KdpB and KdpC.

The protein localises to the cell inner membrane. Functionally, part of the high-affinity ATP-driven potassium transport (or Kdp) system, which catalyzes the hydrolysis of ATP coupled with the electrogenic transport of potassium into the cytoplasm. This subunit acts as a catalytic chaperone that increases the ATP-binding affinity of the ATP-hydrolyzing subunit KdpB by the formation of a transient KdpB/KdpC/ATP ternary complex. In Escherichia coli O6:H1 (strain CFT073 / ATCC 700928 / UPEC), this protein is Potassium-transporting ATPase KdpC subunit.